The chain runs to 901 residues: Protein translocase subunit SecA (901 aa).

Residues Gln-87, 105 to 109 (GEGKT), and Asp-512 each bind ATP. The interval 859-901 (HQDDDSAAAAALAAQTGERKVGRNDPCPCGSGKKYKQCHGRLQ) is disordered. Cys-885, Cys-887, Cys-896, and His-897 together coordinate Zn(2+). The segment covering 891–901 (KKYKQCHGRLQ) has biased composition (basic residues).

Belongs to the SecA family. As to quaternary structure, monomer and homodimer. Part of the essential Sec protein translocation apparatus which comprises SecA, SecYEG and auxiliary proteins SecDF-YajC and YidC. Zn(2+) is required as a cofactor.

The protein resides in the cell inner membrane. It localises to the cytoplasm. It catalyses the reaction ATP + H2O + cellular proteinSide 1 = ADP + phosphate + cellular proteinSide 2.. Part of the Sec protein translocase complex. Interacts with the SecYEG preprotein conducting channel. Has a central role in coupling the hydrolysis of ATP to the transfer of proteins into and across the cell membrane, serving both as a receptor for the preprotein-SecB complex and as an ATP-driven molecular motor driving the stepwise translocation of polypeptide chains across the membrane. The sequence is that of Protein translocase subunit SecA from Escherichia coli (strain 55989 / EAEC).